Consider the following 1047-residue polypeptide: [F-actin]-monooxygenase MICAL1 (1047 aa).

Positions 1 to 489 (MASPTSTNPA…QDLYDIMDKE (489 aa)) are monooxygenase domain. FAD is bound by residues cysteine 95, 114–116 (EKR), 121–123 (RHN), phenylalanine 181, tyrosine 293, and aspartate 393. A Phosphothreonine modification is found at threonine 475. The Calponin-homology (CH) domain occupies 507 to 611 (SAGTEELLHW…YLSHFHSAFK (105 aa)). A Phosphoserine modification is found at serine 616. Residues 644-672 (RTKVEEETPCTEEPPVSEPSVPPALPSEH) form a disordered region. The span at 659–668 (VSEPSVPPAL) shows a compositional bias: pro residues. In terms of domain architecture, LIM zinc-binding spans 679 to 741 (DVCELCGKRL…LQHLPQEDQK (63 aa)). Zn(2+) contacts are provided by cysteine 681, cysteine 684, histidine 702, cysteine 705, cysteine 708, cysteine 711, cysteine 731, and histidine 734. 2 disordered regions span residues 739–787 (DQKE…QPAR) and 849–872 (EKGE…PPPL). Positions 745-767 (NNGSPENQELPTPGDSTTQSGPS) are enriched in polar residues. A phosphoserine mark is found at serine 777 and serine 781. A compositionally biased stretch (acidic residues) spans 851–868 (GEEEEEEEEEEEEEEEEL). Residues 905–1047 (KEEEMKRFCK…EERRLREMPV (143 aa)) enclose the bMERB domain. Residues 912–996 (FCKAQAIQRR…LEEKQRQLDH (85 aa)) adopt a coiled-coil conformation.

The protein belongs to the Mical family. Interacts with STK38 and STK38L. Associates with the SH3 domain of NEDD9. Interacts with VIM and PLXNA3. Interacts with RAB1B, RAB8A, RAB10, RAB13 and RAB15 (in their GTP-bound forms); binding to RAB1B is of low affinity compared to other Rab proteins; at least in case of RAB8A and RAB10 can bind 2 molecules of the Rab proteins simultaneously. Interacts with GRAF1/ARHGAP26, GRAF2/ARHGAP10, RAB8A, RAB8B and RAB10; may bind simultaneously to GRAFs and Rabs and connects GRAFs to Rabs. Does not interact with RAB1 and RAB11A. FAD is required as a cofactor.

The protein resides in the cytoplasm. The protein localises to the cytoskeleton. It localises to the endosome membrane. It is found in the midbody. It catalyses the reaction L-methionyl-[F-actin] + NADPH + O2 + H(+) = L-methionyl-(R)-S-oxide-[F-actin] + NADP(+) + H2O. The enzyme catalyses NADPH + O2 + H(+) = H2O2 + NADP(+). Functionally, monooxygenase that promotes depolymerization of F-actin by mediating oxidation of specific methionine residues on actin to form methionine-sulfoxide, resulting in actin filament disassembly and preventing repolymerization. In the absence of actin, it also functions as a NADPH oxidase producing H(2)O(2). Acts as a cytoskeletal regulator that connects NEDD9 to intermediate filaments. Also acts as a negative regulator of apoptosis via its interaction with STK38 and STK38L; acts by antagonizing STK38 and STK38L activation by MST1/STK4. Involved in regulation of lamina-specific connectivity in the nervous system such as the development of lamina-restricted hippocampal connections. Through redox regulation of the actin cytoskeleton controls the intracellular distribution of secretory vesicles containing L1/neurofascin/NgCAM family proteins in neurons, thereby regulating their cell surface levels. May act as Rab effector protein and play a role in vesicle trafficking. Promotes endosomal tubule extension by associating with RAB8 (RAB8A or RAB8B), RAB10 and GRAF (GRAF1/ARHGAP26 or GRAF2/ARHGAP10) on the endosomal membrane which may connect GRAFs to Rabs, thereby participating in neosynthesized Rab8-Rab10-Rab11-dependent protein export. The chain is [F-actin]-monooxygenase MICAL1 (Mical1) from Rattus norvegicus (Rat).